A 405-amino-acid chain; its full sequence is Aminodeoxyfutalosine deaminase (405 aa).

Residues histidine 61 and histidine 63 each contribute to the a divalent metal cation site. Residues glutamate 141, serine 145, and histidine 179 each coordinate substrate. Histidine 206 contributes to the a divalent metal cation binding site. Residue glutamate 209 is the Proton donor of the active site. Aspartate 306 lines the a divalent metal cation pocket.

Belongs to the metallo-dependent hydrolases superfamily. The cofactor is a divalent metal cation.

It carries out the reaction 6-amino-6-deoxyfutalosine + H2O + H(+) = futalosine + NH4(+). It participates in quinol/quinone metabolism; menaquinone biosynthesis. Catalyzes the deamination of aminodeoxyfutalosine (AFL) into futalosine (FL), a step in the biosynthesis of menaquinone (MK, vitamin K2). To a lesser extent, can also deaminate 5'-methylthioadenosine. The chain is Aminodeoxyfutalosine deaminase from Nitratiruptor sp. (strain SB155-2).